A 257-amino-acid polypeptide reads, in one-letter code: Snake venom serine protease CL5 (257 aa).

The signal sequence occupies residues 1-18 (MVLIRVLANLLILQLSYA). The propeptide occupies 19-24 (QRSSEL). Residues 25–248 (VIGGDECNIN…HLDWIQSIIA (224 aa)) form the Peptidase S1 domain. 5 cysteine pairs are disulfide-bonded: C31–C162, C49–C65, C141–C209, C173–C188, and C199–C224. H64 serves as the catalytic Charge relay system. N78 and N102 each carry an N-linked (GlcNAc...) asparagine glycan. D109 acts as the Charge relay system in catalysis. N-linked (GlcNAc...) asparagine glycans are attached at residues N153 and N169. S203 acts as the Charge relay system in catalysis. N250 carries an N-linked (GlcNAc...) asparagine glycan.

Belongs to the peptidase S1 family. Snake venom subfamily. Monomer. As to expression, expressed by the venom gland.

The protein resides in the secreted. Functionally, snake venom serine protease that may act in the hemostasis system of the prey. The protein is Snake venom serine protease CL5 of Trimeresurus stejnegeri (Chinese green tree viper).